Reading from the N-terminus, the 105-residue chain is Small ribosomal subunit protein eS24 (105 aa).

Belongs to the eukaryotic ribosomal protein eS24 family.

This is Small ribosomal subunit protein eS24 from Ignicoccus hospitalis (strain KIN4/I / DSM 18386 / JCM 14125).